Reading from the N-terminus, the 315-residue chain is G-box-binding factor 1 (315 aa).

Disordered stretches follow at residues Met-1–Ser-56 and Met-93–Leu-268. Over residues Pro-46–Ser-56 the composition is skewed to pro residues. Composition is skewed to polar residues over residues Gly-133–Gly-164 and Ala-178–Ile-187. The region spanning Glu-222–Ile-285 is the bZIP domain. The segment at Lys-224 to Lys-243 is basic motif. The span at Gln-249–Gln-262 shows a compositional bias: polar residues. Residues Leu-250 to Ile-285 are leucine-zipper.

Belongs to the bZIP family. In terms of assembly, monomer and heterodimers with BZIP16 and BZIP68. Interacts with GIP1. Post-translationally, phosphorylated by CK2. Found in both light and dark grown leaves.

It localises to the nucleus. Functionally, binds to the G-box motif (5'-CCACGTGG-3') of the rbcS-1A gene promoter. G-box and G-box-like motifs are cis-acting elements defined in promoters of certain plant genes which are regulated by such diverse stimuli as light-induction or hormone control. Binds to the G-box motif 5'-CACGTG-3' of LHCB2.4 (At3g27690) promoter. May act as transcriptional activator in light-regulated expression of LHCB2.4. Probably binds DNA as monomer. DNA-binding activity is redox-dependent. The sequence is that of G-box-binding factor 1 (GBF1) from Arabidopsis thaliana (Mouse-ear cress).